Consider the following 447-residue polypeptide: Blue-light photoreceptor PHR2 (447 aa).

Residues 1–14 show a composition bias toward polar residues; that stretch reads MDSSNVEENLNPET. Residues 1-20 form a disordered region; it reads MDSSNVEENLNPETKSAEEQ. Residues 115–249 form the Photolyase/cryptochrome alpha/beta domain; that stretch reads RAAVVWFRND…EVKYFWGSTL (135 aa).

Belongs to the DNA photolyase class-1 family. The cofactor is FAD.

This is Blue-light photoreceptor PHR2 (PHR2) from Arabidopsis thaliana (Mouse-ear cress).